We begin with the raw amino-acid sequence, 307 residues long: Heme A synthase (307 aa).

At 1-8 (MQHNRYLK) the chain is on the cytoplasmic side. A helical transmembrane segment spans residues 9-29 (WFAVAATVGMLLILLGGALVT). Topologically, residues 30–56 (KTDSGLGCGRNWPDCNGSLIPKEITPE) are extracellular. Residues cysteine 37 and cysteine 44 are joined by a disulfide bond. A helical transmembrane segment spans residues 57 to 77 (VLIEFSHRLVTGVVSISILVL). The active site involves glutamate 60. A heme o-binding site is contributed by histidine 63. The Cytoplasmic portion of the chain corresponds to 78-92 (TVWTWRKLGHIREVK). Residues 93–113 (LLGFLAMFFLIAQALIGAAQV) traverse the membrane as a helical segment. The Extracellular portion of the chain corresponds to 114–123 (LWGQGDFILA). Residues 124–144 (LHFGISLISFAAVLLLSMIVF) form a helical membrane-spanning segment. Residue histidine 125 participates in heme o binding. The Cytoplasmic segment spans residues 145–161 (EVDRKFDADNVFIGKKL). The helical transmembrane segment at 162–182 (RWHTIAVTIYSYLVVYTGALV) threads the bilayer. At 183–218 (RHTDSSLICPDWPFCYNETPLASPNNMYEWVQMGHR) the chain is on the extracellular side. Cysteine 191 and cysteine 197 form a disulfide bridge. Histidine 217 contacts heme b. Residues 219 to 239 (LAVLIIFIWIAYITWHAVKEY) form a helical membrane-spanning segment. At 240-247 (KNQRVVYY) the chain is on the cytoplasmic side. Residues 248 to 268 (GWIIAFTIVFLQVIAGMLVVL) traverse the membrane as a helical segment. Residues 269–276 (TKLNLTVA) lie on the Extracellular side of the membrane. The chain crosses the membrane as a helical span at residues 277–297 (LMHSLLISLLFGLLCYMIMLV). Histidine 279 contributes to the heme b binding site. Residues 298-307 (ARSNYNEKMK) lie on the Cytoplasmic side of the membrane.

It belongs to the COX15/CtaA family. Type 1 subfamily. In terms of assembly, interacts with CtaB. Heme b is required as a cofactor.

It is found in the cell membrane. The catalysed reaction is Fe(II)-heme o + 2 A + H2O = Fe(II)-heme a + 2 AH2. The protein operates within porphyrin-containing compound metabolism; heme A biosynthesis; heme A from heme O: step 1/1. Functionally, catalyzes the conversion of heme O to heme A by two successive hydroxylations of the methyl group at C8. The first hydroxylation forms heme I, the second hydroxylation results in an unstable dihydroxymethyl group, which spontaneously dehydrates, resulting in the formyl group of heme A. The chain is Heme A synthase from Lysinibacillus sphaericus (strain C3-41).